The chain runs to 42 residues: Pelovaterin (42 aa).

Intrachain disulfides connect Cys8/Cys38, Cys16/Cys32, and Cys24/Cys39.

It localises to the secreted. Its subcellular location is the extracellular space. It is found in the extracellular matrix. Its function is as follows. Induces the nucleation and stabilization of vaterite, one of the crystalline polymorphs of calcium carbonate. Exhibits strong antimicrobial activity against Pseudomonas aeruginosa and Proteus vulgaris. This Pelodiscus sinensis (Chinese softshell turtle) protein is Pelovaterin.